We begin with the raw amino-acid sequence, 297 residues long: Polyhedral envelope protein (297 aa).

The protein belongs to the baculoviridae PE family.

It localises to the virion membrane. In terms of biological role, major component of the polyhedra envelope. The chain is Polyhedral envelope protein from Orgyia pseudotsugata (Douglas-fir tussock moth).